We begin with the raw amino-acid sequence, 67 residues long: Small ribosomal subunit protein bS21 (67 aa).

Belongs to the bacterial ribosomal protein bS21 family.

This Rhodospirillum centenum (strain ATCC 51521 / SW) protein is Small ribosomal subunit protein bS21.